The primary structure comprises 308 residues: tRNA pseudouridine synthase B (308 aa).

The Nucleophile role is filled by Asp47.

This sequence belongs to the pseudouridine synthase TruB family. Type 1 subfamily.

It carries out the reaction uridine(55) in tRNA = pseudouridine(55) in tRNA. In terms of biological role, responsible for synthesis of pseudouridine from uracil-55 in the psi GC loop of transfer RNAs. The protein is tRNA pseudouridine synthase B of Rhodospirillum rubrum (strain ATCC 11170 / ATH 1.1.1 / DSM 467 / LMG 4362 / NCIMB 8255 / S1).